The chain runs to 158 residues: C-type lectin (158 aa).

An N-terminal signal peptide occupies residues methionine 1–cysteine 23. 4 disulfide bridges follow: cysteine 26–cysteine 37, cysteine 54–cysteine 154, cysteine 61–cysteine 156, and cysteine 129–cysteine 146. The region spanning arginine 33–arginine 155 is the C-type lectin domain. 2 N-linked (GlcNAc...) asparagine glycosylation sites follow: asparagine 111 and asparagine 121. The short motif at glutamate 119–asparagine 121 is the Mannose-binding element. Residues glutamate 127, asparagine 142, and aspartate 143 each coordinate Ca(2+).

Belongs to the true venom lectin family. In terms of assembly, homodimer; non-covalently linked. As to expression, expressed by the venom gland.

It localises to the secreted. Mannose-binding lectin which recognizes specific carbohydrate structures and agglutinates a variety of animal cells by binding to cell-surface glycoproteins and glycolipids. May be a calcium-dependent lectin. This is C-type lectin from Micrurus corallinus (Brazilian coral snake).